Consider the following 270-residue polypeptide: MASWNSIPLEISYEIVGWIAFASWSISFYPQLILNFRRRSVVGLNFDFVMLNLTKHSSYMIYNVCLYFSPVIQKQYFDTYGDKEMIPVAANDVAFSIHAVVMTAVTLFQIFIYERGPQKVSRLAIGIVVVVWGFAAICFFIALPTHSWLWLISIFNSIQVFMTCVKYIPQAKMNFTRKSTVGWSIGNILLDFTGGLANYLQMVIQSIDQNSWKNFYGNMGKTLLSLISIFFDILFMFQHYVLYPEKKVSKSPETGEESNEPLIDSSHEHV.

The PQ-loop 1 domain maps to 9–75; that stretch reads LEISYEIVGW…LYFSPVIQKQ (67 aa). A helical transmembrane segment spans residues 14 to 34; that stretch reads EIVGWIAFASWSISFYPQLIL. The N-linked (GlcNAc...) asparagine glycan is linked to Asn-52. 3 helical membrane-spanning segments follow: residues 93 to 113, 123 to 143, and 148 to 168; these read VAFS…IFIY, LAIG…FIAL, and WLWL…VKYI. In terms of domain architecture, PQ-loop 2 spans 151–213; sequence LISIFNSIQV…IQSIDQNSWK (63 aa). N-linked (GlcNAc...) asparagine glycosylation is present at Asn-174. A run of 2 helical transmembrane segments spans residues 180–200 and 223–243; these read TVGW…ANYL and LLSL…YVLY. The tract at residues 250-270 is disordered; the sequence is KSPETGEESNEPLIDSSHEHV.

This sequence belongs to the cystinosin (TC 2.A.43.1) family.

It localises to the lysosome membrane. Thought to transport cystine out of lysosomes. This is Cystinosin homolog from Arabidopsis thaliana (Mouse-ear cress).